The primary structure comprises 161 residues: Vitamin K epoxide reductase complex subunit 1 (161 aa).

Topologically, residues 1-9 (MGTTWRSPG) are cytoplasmic. Residues 10-29 (LVRLALCLAGLALSLYALHV) traverse the membrane as a helical segment. Residues 30-80 (KAARARDENYRALCDVGTAISCSRVFSSRWGRGFGLVEHMLGADSVLNQSN) lie on the Lumenal side of the membrane. Cysteine 43 and cysteine 51 are joined by a disulfide. Residue asparagine 80 coordinates (S)-warfarin. The helical transmembrane segment at 81-95 (SIFGCLFYTLQLLLG) threads the bilayer. Over 96-100 (CLRGR) the chain is Cytoplasmic. The chain crosses the membrane as a helical span at residues 101–128 (WASILLVLSSLVSVAGSVYLAWILFFVL). Residues 129–131 (YDF) lie on the Lumenal side of the membrane. A disulfide bridge links cysteine 132 with cysteine 135. Residues 132–153 (CIVCITTYAINVGLMLLSFQKV) form a helical membrane-spanning segment. Phylloquinone is bound by residues cysteine 135 and tyrosine 139. Residue tyrosine 139 coordinates (S)-warfarin. The Cytoplasmic segment spans residues 154–161 (PEHKTKKH).

Belongs to the VKOR family. Detected in liver.

The protein resides in the endoplasmic reticulum membrane. The enzyme catalyses phylloquinone + [protein]-disulfide + H2O = 2,3-epoxyphylloquinone + [protein]-dithiol. The catalysed reaction is phylloquinol + [protein]-disulfide = phylloquinone + [protein]-dithiol. Inhibited by warfarin (coumadin). Warfarin locks VKORC1 in both redox states into the closed conformation. In terms of biological role, involved in vitamin K metabolism. Catalytic subunit of the vitamin K epoxide reductase (VKOR) complex which reduces inactive vitamin K 2,3-epoxide to active vitamin K. Vitamin K is required for the gamma-carboxylation of various proteins, including clotting factors, and is required for normal blood coagulation, but also for normal bone development. This is Vitamin K epoxide reductase complex subunit 1 (Vkorc1) from Mus musculus (Mouse).